The primary structure comprises 1068 residues: Ubiquitin-protein ligase E3B (1068 aa).

Met-1 carries the N-acetylmethionine modification. The IQ domain maps to 29–58 (RERAAVVIQAHVRSFLCRSRLQRDIRREID). Ser-419 carries the phosphoserine modification. The HECT domain occupies 702–1068 (SQHAMKGVIR…ISMNTGFELS (367 aa)). The Glycyl thioester intermediate role is filled by Cys-1036.

In terms of tissue distribution, widely expressed.

It is found in the postsynaptic density. It carries out the reaction S-ubiquitinyl-[E2 ubiquitin-conjugating enzyme]-L-cysteine + [acceptor protein]-L-lysine = [E2 ubiquitin-conjugating enzyme]-L-cysteine + N(6)-ubiquitinyl-[acceptor protein]-L-lysine.. Its pathway is protein modification; protein ubiquitination. Functionally, E3 ubiquitin-protein ligase which accepts ubiquitin from an E2 ubiquitin-conjugating enzyme in the form of a thioester and then directly transfers the ubiquitin to targeted substrates. Ubiquitinates BCKDK and targets it for degradation, thereby regulating various metabolic processes. Involved in the positive regulation of neurite branching in hippocampal neurons and the control of neuronal spine number and morphology, through the ubiquitination of PPP3CC. This is Ubiquitin-protein ligase E3B (UBE3B) from Homo sapiens (Human).